A 258-amino-acid polypeptide reads, in one-letter code: Phosphate import ATP-binding protein PstB (258 aa).

Residues 12–253 (LEVKNLNFYY…PARKETEDYI (242 aa)) form the ABC transporter domain. 44–51 (GPSGCGKS) lines the ATP pocket.

It belongs to the ABC transporter superfamily. Phosphate importer (TC 3.A.1.7) family. In terms of assembly, the complex is composed of two ATP-binding proteins (PstB), two transmembrane proteins (PstC and PstA) and a solute-binding protein (PstS).

The protein localises to the cell inner membrane. It carries out the reaction phosphate(out) + ATP + H2O = ADP + 2 phosphate(in) + H(+). Functionally, part of the ABC transporter complex PstSACB involved in phosphate import. Responsible for energy coupling to the transport system. This is Phosphate import ATP-binding protein PstB from Bordetella pertussis (strain Tohama I / ATCC BAA-589 / NCTC 13251).